Reading from the N-terminus, the 363-residue chain is Anhydro-N-acetylmuramic acid kinase (363 aa).

10–17 is a binding site for ATP; the sequence is GTSLDGLD.

It belongs to the anhydro-N-acetylmuramic acid kinase family.

It carries out the reaction 1,6-anhydro-N-acetyl-beta-muramate + ATP + H2O = N-acetyl-D-muramate 6-phosphate + ADP + H(+). It functions in the pathway amino-sugar metabolism; 1,6-anhydro-N-acetylmuramate degradation. Its pathway is cell wall biogenesis; peptidoglycan recycling. Its function is as follows. Catalyzes the specific phosphorylation of 1,6-anhydro-N-acetylmuramic acid (anhMurNAc) with the simultaneous cleavage of the 1,6-anhydro ring, generating MurNAc-6-P. Is required for the utilization of anhMurNAc either imported from the medium or derived from its own cell wall murein, and thus plays a role in cell wall recycling. Contributes to intrinsic fosfomycin resistance in P.putida. This chain is Anhydro-N-acetylmuramic acid kinase, found in Pseudomonas putida (strain ATCC 47054 / DSM 6125 / CFBP 8728 / NCIMB 11950 / KT2440).